Reading from the N-terminus, the 123-residue chain is Small ribosomal subunit protein uS13 (123 aa).

Positions 93 to 123 (HRKGLPVRGQNTKNNARTRKGPAKAIAGKKK) are disordered. Residues 108-123 (ARTRKGPAKAIAGKKK) are compositionally biased toward basic residues.

It belongs to the universal ribosomal protein uS13 family. Part of the 30S ribosomal subunit. Forms a loose heterodimer with protein S19. Forms two bridges to the 50S subunit in the 70S ribosome.

Located at the top of the head of the 30S subunit, it contacts several helices of the 16S rRNA. In the 70S ribosome it contacts the 23S rRNA (bridge B1a) and protein L5 of the 50S subunit (bridge B1b), connecting the 2 subunits; these bridges are implicated in subunit movement. Contacts the tRNAs in the A and P-sites. This Leuconostoc mesenteroides subsp. mesenteroides (strain ATCC 8293 / DSM 20343 / BCRC 11652 / CCM 1803 / JCM 6124 / NCDO 523 / NBRC 100496 / NCIMB 8023 / NCTC 12954 / NRRL B-1118 / 37Y) protein is Small ribosomal subunit protein uS13.